The following is a 109-amino-acid chain: Protease inhibitor SIL-V2 (109 aa).

Cystine bridges form between cysteine 30–cysteine 45 and cysteine 67–cysteine 97.

This sequence belongs to the protease inhibitor I16 (SSI) family. In terms of assembly, homodimer.

The protein localises to the secreted. This chain is Protease inhibitor SIL-V2, found in Streptomyces orinoci (Streptoverticillium orinoci).